The following is a 241-amino-acid chain: MPKYEIMTILDPKAEMAIIDNLLKTVFGDNSTEKLRKLETTNLAYPIRKSKIAQYFLVELNAPTNLIEEFVRRANITREIWRYLIVNLDSEKGLNKKPKIRERNRKYTPRRDRFDKPNFRGNPKSRFDQQDQQATKNQQNFQQNQQNQTSQYRENSRQNQDDFQQVSSNQQNFRQNQQNQSGYHRENNRQNQENIHQNNKNHQNQTSQTQRSRRQYQPIKNPKFNQKEKENYNNKKPQSSN.

Residues 97–108 show a composition bias toward basic residues; it reads KPKIRERNRKYT. 2 disordered regions span residues 97-187 and 199-241; these read KPKI…HREN and NKNH…QSSN. The segment covering 109-118 has biased composition (basic and acidic residues); it reads PRRDRFDKPN. Low complexity-rich tracts occupy residues 130 to 151, 161 to 180, and 199 to 210; these read QDQQATKNQQNFQQNQQNQTSQ, DDFQQVSSNQQNFRQNQQNQ, and NKNHQNQTSQTQ.

This sequence belongs to the bacterial ribosomal protein bS6 family.

Binds together with bS18 to 16S ribosomal RNA. In Mesomycoplasma hyopneumoniae (strain 7448) (Mycoplasma hyopneumoniae), this protein is Small ribosomal subunit protein bS6.